Consider the following 159-residue polypeptide: Small ribosomal subunit protein uS9 (159 aa).

The protein belongs to the universal ribosomal protein uS9 family.

This chain is Small ribosomal subunit protein uS9, found in Rickettsia rickettsii (strain Iowa).